A 151-amino-acid polypeptide reads, in one-letter code: uncharacterized protein (151 aa).

This is an uncharacterized protein from Bacillus subtilis (strain 168).